The chain runs to 493 residues: Leucine-rich repeat-containing protein 14 (493 aa).

One copy of the LRR 1; degenerate repeat lies at 111-146; that stretch reads KHTLRVLDMTGLLDDGVEQDPGTMSMWDCTAAVART. One copy of the LRR 2; degenerate repeat lies at 194 to 218; sequence RLCCRDLRAEDLPMRNTVALLQLLD. The stretch at 219 to 246 is one LRR 3; degenerate repeat; it reads AGCLRRIDLRFNNLGLRGLSVIIPHVAR. The stretch at 247-282 is one LRR 4; degenerate repeat; it reads FQHLASLRLHYVHGDSRQPSVDGEDNFRYFLAQMGR. LRR repeat units follow at residues 283–307, 308–339, 340–360, 364–391, and 392–416; these read FICL…LSTL, QRPL…AHLK, KLDL…QGLL, AATL…TLTR, and CASL…LLRD.

The protein belongs to the PRAME family. LRRC14 subfamily. Interacts with IKBKB; disrupts IKBKB-IKBKG interaction preventing I-kappa-B-kinase (IKK) core complex formation and leading to a decrease of IKBKB phosphorylation and NF-kappaB activation. Interacts with CHUK.

The protein localises to the cytoplasm. Functionally, negatively regulates Toll-like receptor-mediated NF-kappa-B signaling by disrupting IKK core complex formation through interaction with IKBKB. The protein is Leucine-rich repeat-containing protein 14 of Rattus norvegicus (Rat).